Consider the following 172-residue polypeptide: Adenine phosphoribosyltransferase (172 aa).

It belongs to the purine/pyrimidine phosphoribosyltransferase family. As to quaternary structure, homodimer.

It localises to the cytoplasm. The catalysed reaction is AMP + diphosphate = 5-phospho-alpha-D-ribose 1-diphosphate + adenine. The protein operates within purine metabolism; AMP biosynthesis via salvage pathway; AMP from adenine: step 1/1. In terms of biological role, catalyzes a salvage reaction resulting in the formation of AMP, that is energically less costly than de novo synthesis. This chain is Adenine phosphoribosyltransferase, found in Prochlorococcus marinus (strain MIT 9215).